The primary structure comprises 304 residues: Porphobilinogen deaminase (304 aa).

Cys240 carries the post-translational modification S-(dipyrrolylmethanemethyl)cysteine.

Belongs to the HMBS family. In terms of assembly, monomer. The cofactor is dipyrromethane.

It carries out the reaction 4 porphobilinogen + H2O = hydroxymethylbilane + 4 NH4(+). It participates in porphyrin-containing compound metabolism; protoporphyrin-IX biosynthesis; coproporphyrinogen-III from 5-aminolevulinate: step 2/4. Functionally, tetrapolymerization of the monopyrrole PBG into the hydroxymethylbilane pre-uroporphyrinogen in several discrete steps. The protein is Porphobilinogen deaminase of Xanthomonas oryzae pv. oryzae (strain MAFF 311018).